Here is a 498-residue protein sequence, read N- to C-terminus: Glycerol kinase (498 aa).

Threonine 11 provides a ligand contact to ADP. ATP is bound by residues threonine 11, serine 12, and serine 13. Threonine 11 lines the sn-glycerol 3-phosphate pocket. Arginine 15 provides a ligand contact to ADP. Residues arginine 81, glutamate 82, tyrosine 133, and aspartate 242 each contribute to the sn-glycerol 3-phosphate site. Positions 81, 82, 133, 242, and 243 each coordinate glycerol. Residues threonine 264 and glycine 307 each coordinate ADP. ATP contacts are provided by threonine 264, glycine 307, glutamine 311, and glycine 412. The ADP site is built by glycine 412 and asparagine 416.

Belongs to the FGGY kinase family.

It carries out the reaction glycerol + ATP = sn-glycerol 3-phosphate + ADP + H(+). It participates in polyol metabolism; glycerol degradation via glycerol kinase pathway; sn-glycerol 3-phosphate from glycerol: step 1/1. Inhibited by fructose 1,6-bisphosphate (FBP). Functionally, key enzyme in the regulation of glycerol uptake and metabolism. Catalyzes the phosphorylation of glycerol to yield sn-glycerol 3-phosphate. This is Glycerol kinase from Acidovorax sp. (strain JS42).